A 148-amino-acid chain; its full sequence is MRNQLLFALAFIPTIAAAASNCEVNVSAGDSMAFNTRSIDIPKSCKEFTVNFAHTGTASKAGMGHNWVLARSADVNDLAKAGVEAGIDKNFIPPNDPRVLAYTPLVGGGEKTSVTFKPSILKDGESYSFYCSFAFHSFMMRGTVKLVD.

A signal peptide spans 1-18 (MRNQLLFALAFIPTIAAA). In terms of domain architecture, Plastocyanin-like spans 19–148 (ASNCEVNVSA…MMRGTVKLVD (130 aa)). Residues cysteine 22 and cysteine 45 are joined by a disulfide bond. 4 residues coordinate Cu cation: histidine 65, cysteine 131, histidine 136, and methionine 140.

The protein localises to the periplasm. The protein operates within one-carbon metabolism; methylamine degradation. Functionally, probable electron acceptor for methylamine dehydrogenase. The sequence is that of Azurin (azu) from Methylobacillus flagellatus (strain ATCC 51484 / DSM 6875 / VKM B-1610 / KT).